Reading from the N-terminus, the 1054-residue chain is DIS3-like exonuclease 1 (1054 aa).

A CSD1 domain is found at 236-309 (AGIKSGRYIQ…PKNEWKGRTV (74 aa)). Residues 365 to 431 (ILVTPWDYRI…GEIATILVEN (67 aa)) enclose the CSD2 domain. Residues 465–816 (RKDLRKSHLV…VHRLLMAAIS (352 aa)) form the RNB domain. Residue Ser989 is modified to Phosphoserine.

Belongs to the RNR ribonuclease family. In terms of assembly, component of the RNA exosome complex. The catalytically inactive RNA exosome core (Exo-9) complex is believed to associate with catalytic subunits EXOSC10, and DIS3 or DIS3L in cytoplasmic- and nuclear-specific RNA exosome complex forms. The cofactor is Mg(2+).

It is found in the cytoplasm. The catalysed reaction is Exonucleolytic cleavage in the 3'- to 5'-direction to yield nucleoside 5'-phosphates.. Catalytic component of the RNA exosome complex which has 3'-&gt;5' exoribonuclease activity and participates in a multitude of cellular RNA processing and degradation events. In the cytoplasm, the RNA exosome complex is involved in general mRNA turnover and specifically degrades inherently unstable mRNAs containing AU-rich elements (AREs) within their 3' untranslated regions, and in RNA surveillance pathways, preventing translation of aberrant mRNAs. It seems to be involved in degradation of histone mRNA. In Homo sapiens (Human), this protein is DIS3-like exonuclease 1 (DIS3L).